The primary structure comprises 323 residues: Aspartate carbamoyltransferase catalytic subunit (323 aa).

Positions 65 and 66 each coordinate carbamoyl phosphate. Position 93 (Lys93) interacts with L-aspartate. Carbamoyl phosphate contacts are provided by Arg115, His149, and Gln152. Residues Arg182 and Arg237 each coordinate L-aspartate. 2 residues coordinate carbamoyl phosphate: Gly278 and Pro279.

The protein belongs to the aspartate/ornithine carbamoyltransferase superfamily. ATCase family. In terms of assembly, heterododecamer (2C3:3R2) of six catalytic PyrB chains organized as two trimers (C3), and six regulatory PyrI chains organized as three dimers (R2).

It carries out the reaction carbamoyl phosphate + L-aspartate = N-carbamoyl-L-aspartate + phosphate + H(+). It functions in the pathway pyrimidine metabolism; UMP biosynthesis via de novo pathway; (S)-dihydroorotate from bicarbonate: step 2/3. Catalyzes the condensation of carbamoyl phosphate and aspartate to form carbamoyl aspartate and inorganic phosphate, the committed step in the de novo pyrimidine nucleotide biosynthesis pathway. In Aromatoleum aromaticum (strain DSM 19018 / LMG 30748 / EbN1) (Azoarcus sp. (strain EbN1)), this protein is Aspartate carbamoyltransferase catalytic subunit.